A 270-amino-acid chain; its full sequence is Tryptophan synthase alpha chain (270 aa).

Active-site proton acceptor residues include Glu49 and Asp60.

This sequence belongs to the TrpA family. Tetramer of two alpha and two beta chains.

It carries out the reaction (1S,2R)-1-C-(indol-3-yl)glycerol 3-phosphate + L-serine = D-glyceraldehyde 3-phosphate + L-tryptophan + H2O. Its pathway is amino-acid biosynthesis; L-tryptophan biosynthesis; L-tryptophan from chorismate: step 5/5. Functionally, the alpha subunit is responsible for the aldol cleavage of indoleglycerol phosphate to indole and glyceraldehyde 3-phosphate. The chain is Tryptophan synthase alpha chain from Marinobacter nauticus (strain ATCC 700491 / DSM 11845 / VT8) (Marinobacter aquaeolei).